Consider the following 455-residue polypeptide: UPF0210 protein Teth514_2074 (455 aa).

Belongs to the UPF0210 family. As to quaternary structure, homodimer.

In Thermoanaerobacter sp. (strain X514), this protein is UPF0210 protein Teth514_2074.